The sequence spans 200 residues: Large ribosomal subunit protein uL29 (200 aa).

The tract at residues 1–107 (MTIAKELKQK…KQETKKAEVK (107 aa)) is large ribosomal subunit protein uL29. Residues 92-200 (STKPESKQET…KMIKTKEKKQ (109 aa)) are disordered. A compositionally biased stretch (basic and acidic residues) spans 93–179 (TKPESKQETK…QEVKKVEAKK (87 aa)). Residues 108–200 (PKVESKPESK…KMIKTKEKKQ (93 aa)) are unknown. Over residues 186–200 (KPVKAKMIKTKEKKQ) the composition is skewed to basic residues.

Belongs to the universal ribosomal protein uL29 family.

This Mycoplasma genitalium (strain ATCC 33530 / DSM 19775 / NCTC 10195 / G37) (Mycoplasmoides genitalium) protein is Large ribosomal subunit protein uL29.